The sequence spans 111 residues: UPF0375 protein ule-4 (111 aa).

Positions 1–18 are cleaved as a signal peptide; it reads MNSRLVLLLAVSVALVSA. N-linked (GlcNAc...) asparagine glycans are attached at residues Asn23 and Asn58.

This sequence belongs to the UPF0375 family.

The protein localises to the secreted. The polypeptide is UPF0375 protein ule-4 (Caenorhabditis elegans).